A 410-amino-acid chain; its full sequence is MKEVIAVKEITRFKTRTEEFSPYAWCKRMLENDPVSYHEGTDTWNVFKYEDVKRVLSDYKHFSSVRKRTTISVGTDSEEGSVPEKIQITESDPPDHRKRRSLLAAAFTPRSLQNWEPRIQEIADELIGQMDGGTEIDIVASLASPLPIIVMADLMGVPSKDRLLFKKWVDTLFLPFDREKQEEVDKLKQVAAKEYYQYLYPIVVQKRLNPADDIISDLLKSEVDGEMFTDDEVVRTTMLILGAGVETTSHLLANSFYSLLYDDKEVYQELHENLDLVPQAVEEMLRFRFNLIKLDRTVKEDNDLLGVELKEGDSVVVWMSAANMDEEMFEDPFTLNIHRPNNKKHLTFGNGPHFCLGAPLARLEAKIALTAFLKKFKHIEAVPSFQLEENLTDSATGQTLTSLPLKASRM.

C355 lines the heme pocket.

Belongs to the cytochrome P450 family. Heme serves as cofactor.

It localises to the cytoplasm. It catalyses the reaction reduced 2[4Fe-4S]-[ferredoxin] + progesterone + O2 + 2 H(+) = 15beta-hydroxyprogesterone + oxidized 2[4Fe-4S]-[ferredoxin] + H2O. Has the capacity to hydroxylate certain steroids in the 15-beta position. Also hydroxylates progesterone in the 11-alpha and 9-beta position. The polypeptide is Cytochrome P450(MEG) (cyp106A2) (Priestia megaterium (Bacillus megaterium)).